The sequence spans 331 residues: Aspartate carbamoyltransferase catalytic subunit (331 aa).

Arginine 66 and threonine 67 together coordinate carbamoyl phosphate. Residue lysine 94 participates in L-aspartate binding. Carbamoyl phosphate is bound by residues arginine 116, histidine 149, and glutamine 152. 2 residues coordinate L-aspartate: arginine 189 and arginine 243. Glycine 284 and proline 285 together coordinate carbamoyl phosphate.

The protein belongs to the aspartate/ornithine carbamoyltransferase superfamily. ATCase family. Heterododecamer (2C3:3R2) of six catalytic PyrB chains organized as two trimers (C3), and six regulatory PyrI chains organized as three dimers (R2).

The enzyme catalyses carbamoyl phosphate + L-aspartate = N-carbamoyl-L-aspartate + phosphate + H(+). Its pathway is pyrimidine metabolism; UMP biosynthesis via de novo pathway; (S)-dihydroorotate from bicarbonate: step 2/3. In terms of biological role, catalyzes the condensation of carbamoyl phosphate and aspartate to form carbamoyl aspartate and inorganic phosphate, the committed step in the de novo pyrimidine nucleotide biosynthesis pathway. The sequence is that of Aspartate carbamoyltransferase catalytic subunit from Thermosynechococcus vestitus (strain NIES-2133 / IAM M-273 / BP-1).